Here is a 556-residue protein sequence, read N- to C-terminus: 2-succinyl-5-enolpyruvyl-6-hydroxy-3-cyclohexene-1-carboxylate synthase (556 aa).

The protein belongs to the TPP enzyme family. MenD subfamily. Homodimer. Mg(2+) is required as a cofactor. The cofactor is Mn(2+). Thiamine diphosphate serves as cofactor.

The enzyme catalyses isochorismate + 2-oxoglutarate + H(+) = 5-enolpyruvoyl-6-hydroxy-2-succinyl-cyclohex-3-ene-1-carboxylate + CO2. Its pathway is quinol/quinone metabolism; 1,4-dihydroxy-2-naphthoate biosynthesis; 1,4-dihydroxy-2-naphthoate from chorismate: step 2/7. It functions in the pathway quinol/quinone metabolism; menaquinone biosynthesis. Its function is as follows. Catalyzes the thiamine diphosphate-dependent decarboxylation of 2-oxoglutarate and the subsequent addition of the resulting succinic semialdehyde-thiamine pyrophosphate anion to isochorismate to yield 2-succinyl-5-enolpyruvyl-6-hydroxy-3-cyclohexene-1-carboxylate (SEPHCHC). The sequence is that of 2-succinyl-5-enolpyruvyl-6-hydroxy-3-cyclohexene-1-carboxylate synthase from Staphylococcus epidermidis (strain ATCC 35984 / DSM 28319 / BCRC 17069 / CCUG 31568 / BM 3577 / RP62A).